A 645-amino-acid polypeptide reads, in one-letter code: Glucans biosynthesis glucosyltransferase H (645 aa).

The segment covering Met1–Thr12 has biased composition (polar residues). The tract at residues Met1–Ala22 is disordered. 7 consecutive transmembrane segments (helical) span residues Leu64–Trp84, Leu98–Val118, Ala423–Ile443, Ala465–Ile485, Ala504–Leu524, Tyr559–Ala579, and Leu580–Leu600.

It belongs to the glycosyltransferase 2 family. OpgH subfamily.

The protein localises to the cell inner membrane. Its pathway is glycan metabolism; osmoregulated periplasmic glucan (OPG) biosynthesis. Involved in the biosynthesis of osmoregulated periplasmic glucans (OPGs). This is Glucans biosynthesis glucosyltransferase H from Xanthomonas oryzae pv. oryzae (strain MAFF 311018).